Consider the following 403-residue polypeptide: Aminomethyltransferase, mitochondrial (403 aa).

Residues 1 to 28 (MHRIVSVVAPLGFRLQAQPLVQSRPLSS) constitute a mitochondrion transit peptide. Positions 232 and 261 each coordinate substrate. Residue Lys368 is modified to N6-succinyllysine. Tyr399 contacts substrate.

It belongs to the GcvT family. In terms of assembly, the glycine cleavage system is composed of four proteins: P, T, L and H.

It localises to the mitochondrion. It catalyses the reaction N(6)-[(R)-S(8)-aminomethyldihydrolipoyl]-L-lysyl-[protein] + (6S)-5,6,7,8-tetrahydrofolate = N(6)-[(R)-dihydrolipoyl]-L-lysyl-[protein] + (6R)-5,10-methylene-5,6,7,8-tetrahydrofolate + NH4(+). The glycine cleavage system catalyzes the degradation of glycine. This is Aminomethyltransferase, mitochondrial from Mus musculus (Mouse).